A 794-amino-acid chain; its full sequence is FT-interacting protein 1 (794 aa).

A compositionally biased stretch (basic and acidic residues) spans 1–27 (MAAKDGAKSQEDYKLKDMKPELGERWP). The disordered stretch occupies residues 1–34 (MAAKDGAKSQEDYKLKDMKPELGERWPHGGQRGG). C2 domains are found at residues 37–158 (WIGS…PQWY), 198–321 (VQGE…SKWY), and 364–492 (YISD…THSY). Ca(2+) is bound by residues aspartate 76, aspartate 123, glutamate 125, and glutamate 131. 4 helical membrane passes run 510 to 532 (LAVRFTCLSLAHMIYLYGHPLLP), 595 to 615 (IVSVFAGLIAMSKWLGDVCYW), 619 to 639 (LTTILFHVLFFILICYPELIL), and 737 to 757 (LFVIFCLVAAMILYVTPFKII).

This sequence belongs to the MCTP family. Interacts with FT in phloem companion cells. It depends on Ca(2+) as a cofactor. In terms of tissue distribution, expressed in the vascular tissues of roots, cotyledons and rosette leaves. Specifically located in the phloem including companion cells. Observed in flowers. Not detected in the shoot apical meristem.

The protein resides in the endoplasmic reticulum membrane. It is found in the cell junction. Its subcellular location is the plasmodesma. Functionally, involved in the export of FT from the phloem companion cells to the sieve elements through the plasmodesmata. Regulates flowering time under long days. May function as a signaling molecule by regulating the trafficking of other regulators. This chain is FT-interacting protein 1, found in Arabidopsis thaliana (Mouse-ear cress).